Consider the following 564-residue polypeptide: Dihydroxy-acid dehydratase (564 aa).

Aspartate 80 is a binding site for Mg(2+). Residue cysteine 121 participates in [2Fe-2S] cluster binding. Residues aspartate 122 and lysine 123 each contribute to the Mg(2+) site. The residue at position 123 (lysine 123) is an N6-carboxylysine. Cysteine 194 is a binding site for [2Fe-2S] cluster. Glutamate 447 provides a ligand contact to Mg(2+). Serine 473 serves as the catalytic Proton acceptor.

This sequence belongs to the IlvD/Edd family. Homodimer. [2Fe-2S] cluster serves as cofactor. It depends on Mg(2+) as a cofactor.

The catalysed reaction is (2R)-2,3-dihydroxy-3-methylbutanoate = 3-methyl-2-oxobutanoate + H2O. It carries out the reaction (2R,3R)-2,3-dihydroxy-3-methylpentanoate = (S)-3-methyl-2-oxopentanoate + H2O. It functions in the pathway amino-acid biosynthesis; L-isoleucine biosynthesis; L-isoleucine from 2-oxobutanoate: step 3/4. It participates in amino-acid biosynthesis; L-valine biosynthesis; L-valine from pyruvate: step 3/4. In terms of biological role, functions in the biosynthesis of branched-chain amino acids. Catalyzes the dehydration of (2R,3R)-2,3-dihydroxy-3-methylpentanoate (2,3-dihydroxy-3-methylvalerate) into 2-oxo-3-methylpentanoate (2-oxo-3-methylvalerate) and of (2R)-2,3-dihydroxy-3-methylbutanoate (2,3-dihydroxyisovalerate) into 2-oxo-3-methylbutanoate (2-oxoisovalerate), the penultimate precursor to L-isoleucine and L-valine, respectively. The protein is Dihydroxy-acid dehydratase of Listeria innocua serovar 6a (strain ATCC BAA-680 / CLIP 11262).